The primary structure comprises 520 residues: GMP synthase [glutamine-hydrolyzing] (520 aa).

Positions 9–202 (KILILDFGSQ…VRAICGCTGH (194 aa)) constitute a Glutamine amidotransferase type-1 domain. Cys-86 functions as the Nucleophile in the catalytic mechanism. Catalysis depends on residues His-176 and Glu-178. Positions 203–395 (WTPGQIIEDA…LGLPHQMVWR (193 aa)) constitute a GMPS ATP-PPase domain. Position 230–236 (230–236 (SGGVDSS)) interacts with ATP.

As to quaternary structure, homodimer.

It carries out the reaction XMP + L-glutamine + ATP + H2O = GMP + L-glutamate + AMP + diphosphate + 2 H(+). It participates in purine metabolism; GMP biosynthesis; GMP from XMP (L-Gln route): step 1/1. In terms of biological role, catalyzes the synthesis of GMP from XMP. The protein is GMP synthase [glutamine-hydrolyzing] of Pelobacter propionicus (strain DSM 2379 / NBRC 103807 / OttBd1).